A 597-amino-acid chain; its full sequence is Spastin (597 aa).

Residues 1–20 (MPNNDILRPLAIPAKYVGSF) are Cytoplasmic-facing. The segment at residues 21–37 (LVFLYNGLYFVFVVNLW) is an intramembrane region (helical). The Cytoplasmic segment spans residues 38-597 (SRLFGKATKT…DWNRLYGSNA (560 aa)). Positions 56–80 (RKLGKDMASRAPPRRGQSSEDNEDG) are disordered. The 78-residue stretch at 91–168 (HHKQAYAYIA…ENTRERMDEL (78 aa)) folds into the MIT domain. The tract at residues 193 to 289 (SARKTSSEPS…PAMMAKQSCV (97 aa)) is disordered. Positions 214 to 231 (SYKQSKSYKNSTTVTTKR) are enriched in polar residues. A compositionally biased stretch (low complexity) spans 232–252 (SQASPSFSSSSSSVNSTAGSS).

The protein belongs to the AAA ATPase family. Spastin subfamily. In terms of assembly, homohexamer. The homohexamer is stabilized by ATP-binding. The homohexamer may adopt a ring conformation through which microtubules pass prior to being severed. Interacts with microtubules.

The protein resides in the membrane. Its subcellular location is the cytoplasm. It localises to the cytoskeleton. It is found in the microtubule organizing center. The protein localises to the centrosome. The enzyme catalyses n ATP + n H2O + a microtubule = n ADP + n phosphate + (n+1) alpha/beta tubulin heterodimers.. ATP-dependent microtubule severing protein. Microtubule severing may promote reorganization of cellular microtubule arrays and the release of microtubules from the microtubule organizing center following nucleation. The sequence is that of Spastin from Nematostella vectensis (Starlet sea anemone).